Consider the following 103-residue polypeptide: Integration host factor subunit beta (103 aa).

Belongs to the bacterial histone-like protein family. As to quaternary structure, heterodimer of an alpha and a beta chain.

In terms of biological role, this protein is one of the two subunits of integration host factor, a specific DNA-binding protein that functions in genetic recombination as well as in transcriptional and translational control. This is Integration host factor subunit beta from Rhizobium meliloti (strain 1021) (Ensifer meliloti).